The chain runs to 843 residues: Glycogen phosphorylase, brain form (843 aa).

An N-acetylalanine modification is found at Ala-2. Ser-15 carries the post-translational modification Phosphoserine; by PHK; in form phosphorylase A. The AMP site is built by Asp-43, Tyr-197, and Arg-310. At Tyr-197 the chain carries Phosphotyrosine. A Phosphotyrosine modification is found at Tyr-473. Lys-569 contributes to the pyridoxal 5'-phosphate binding site. Residues 677–678 are pyridoxal 5'-phosphate; the sequence is TG. Lys-681 carries the post-translational modification N6-(pyridoxal phosphate)lysine.

The protein belongs to the glycogen phosphorylase family. Homodimer. Dimers associate into a tetramer to form the enzymatically active phosphorylase A. Pyridoxal 5'-phosphate is required as a cofactor. In terms of processing, phosphorylation of Ser-15 converts phosphorylase B (unphosphorylated) to phosphorylase A.

It carries out the reaction [(1-&gt;4)-alpha-D-glucosyl](n) + phosphate = [(1-&gt;4)-alpha-D-glucosyl](n-1) + alpha-D-glucose 1-phosphate. Its activity is regulated as follows. Activity of phosphorylase is controlled both by allosteric means (through the non-covalent binding of metabolites) and by covalent modification. Thus AMP allosterically activates, whereas ATP, ADP, and glucose-6-phosphate allosterically inhibit, phosphorylase B. In terms of biological role, glycogen phosphorylase that regulates glycogen mobilization. Phosphorylase is an important allosteric enzyme in carbohydrate metabolism. Enzymes from different sources differ in their regulatory mechanisms and in their natural substrates. However, all known phosphorylases share catalytic and structural properties. This Pongo abelii (Sumatran orangutan) protein is Glycogen phosphorylase, brain form (PYGB).